A 189-amino-acid chain; its full sequence is Adenylate kinase (189 aa).

ATP is bound at residue 11-16 (GSGKGT). The NMP stretch occupies residues 31-60 (STGDVLRAEIKNGTELGKTAKGYIDQGQLI). AMP is bound by residues T32, R37, 58–60 (QLI), 86–89 (GFPR), and Q93. The LID stretch occupies residues 127 to 137 (KRGKESGRADD). An ATP-binding site is contributed by R128. AMP-binding residues include R134 and R145. G173 is a binding site for ATP.

This sequence belongs to the adenylate kinase family. As to quaternary structure, monomer.

The protein localises to the cytoplasm. The catalysed reaction is AMP + ATP = 2 ADP. It participates in purine metabolism; AMP biosynthesis via salvage pathway; AMP from ADP: step 1/1. Catalyzes the reversible transfer of the terminal phosphate group between ATP and AMP. Plays an important role in cellular energy homeostasis and in adenine nucleotide metabolism. The sequence is that of Adenylate kinase from Bacteroides fragilis (strain ATCC 25285 / DSM 2151 / CCUG 4856 / JCM 11019 / LMG 10263 / NCTC 9343 / Onslow / VPI 2553 / EN-2).